A 541-amino-acid polypeptide reads, in one-letter code: MRKSSIRRRATAFGTAGALVTATLIAGAVSAPAASAAPADGHGHGHGHGRSWDREARGAAIAAARAARAGIDWEDCAADWNLPKPIQCGYVTVPMDYAKPYGKQIRLAVDRIGNTGTRSERQGALIYNPGGPGGSGLRFPARVTSKSAVWANTAKAYDFVGFDPRGVGHSAPISCVDPQEFVKAPKADPVPGSEADKRAQRKLAREYAEGCFERSGEMLPHMTTPNTARDLDVIRAALGEKKLNYLGVSYGTYLGAVYGTLFPDHVRRMVVDSVVNPSRDKIWYQANLDQDVAFEGRWKDWQDWVAANDAAYHLGDTRAEVQDQWLKLRAAAAKKPLGGVVGPAELISFFQSAPYYDSAWAPTAEIFSKYVAGDTQALVDAAAPDLSDTAGNASAENGNAVYTAVECTDAKWPANWRTWDRDNTRLHRDHPFMTWANAWMNLPCATWPVKQQTPLNVKTGKGLPPVLIVQSERDAATPYEGAVELHQRFRGSRLITERDAGSHGVTGLVNPCINDRVDTYLLTGGTDARDVTCAPHATPRP.

The first 36 residues, 1–36 (MRKSSIRRRATAFGTAGALVTATLIAGAVSAPAASA), serve as a signal peptide directing secretion. The propeptide occupies 37-39 (APA). The 379-residue stretch at 123–501 (GALIYNPGGP…SRLITERDAG (379 aa)) folds into the AB hydrolase-1 domain. Ser249 serves as the catalytic Nucleophile. Residue Asp474 is part of the active site. Residue His503 is the Proton donor of the active site.

Belongs to the peptidase S33 family.

It is found in the secreted. Its function is as follows. Cleaves tripeptides from the N-termini of proteins. Does not cleave mono- or dipeptides, or N-terminally blocked peptides. The protein is Tripeptidyl aminopeptidase of Streptomyces coelicolor (strain ATCC BAA-471 / A3(2) / M145).